Consider the following 126-residue polypeptide: Probable DNA-directed RNA polymerase II subunit RPB11 (126 aa).

The protein belongs to the archaeal Rpo11/eukaryotic RPB11/RPC19 RNA polymerase subunit family. As to quaternary structure, component of the RNA polymerase II (Pol II) complex consisting of 12 subunits.

The protein localises to the nucleus. In terms of biological role, DNA-dependent RNA polymerase catalyzes the transcription of DNA into RNA using the four ribonucleoside triphosphates as substrates. Component of RNA polymerase II which synthesizes mRNA precursors and many functional non-coding RNAs. Pol II is the central component of the basal RNA polymerase II transcription machinery. It is composed of mobile elements that move relative to each other. RPB11 is part of the core element with the central large cleft. The sequence is that of Probable DNA-directed RNA polymerase II subunit RPB11 from Plasmodium falciparum (isolate 3D7).